Reading from the N-terminus, the 700-residue chain is Polyribonucleotide nucleotidyltransferase (700 aa).

Residues aspartate 491 and aspartate 497 each contribute to the Mg(2+) site. The region spanning proline 558–isoleucine 617 is the KH domain. The region spanning glycine 627–lysine 695 is the S1 motif domain.

Belongs to the polyribonucleotide nucleotidyltransferase family. As to quaternary structure, component of the RNA degradosome, which is a multiprotein complex involved in RNA processing and mRNA degradation. Mg(2+) is required as a cofactor.

The protein localises to the cytoplasm. It catalyses the reaction RNA(n+1) + phosphate = RNA(n) + a ribonucleoside 5'-diphosphate. Functionally, involved in mRNA degradation. Catalyzes the phosphorolysis of single-stranded polyribonucleotides processively in the 3'- to 5'-direction. The protein is Polyribonucleotide nucleotidyltransferase of Psychrobacter cryohalolentis (strain ATCC BAA-1226 / DSM 17306 / VKM B-2378 / K5).